The following is a 560-amino-acid chain: Dihydroxy-acid dehydratase (560 aa).

Position 80 (aspartate 80) interacts with Mg(2+). A [2Fe-2S] cluster-binding site is contributed by cysteine 121. Residues aspartate 122 and lysine 123 each coordinate Mg(2+). Lysine 123 bears the N6-carboxylysine mark. Cysteine 194 contacts [2Fe-2S] cluster. Glutamate 447 contacts Mg(2+). Residue serine 473 is the Proton acceptor of the active site.

Belongs to the IlvD/Edd family. As to quaternary structure, homodimer. [2Fe-2S] cluster serves as cofactor. Mg(2+) is required as a cofactor.

It carries out the reaction (2R)-2,3-dihydroxy-3-methylbutanoate = 3-methyl-2-oxobutanoate + H2O. The enzyme catalyses (2R,3R)-2,3-dihydroxy-3-methylpentanoate = (S)-3-methyl-2-oxopentanoate + H2O. It functions in the pathway amino-acid biosynthesis; L-isoleucine biosynthesis; L-isoleucine from 2-oxobutanoate: step 3/4. It participates in amino-acid biosynthesis; L-valine biosynthesis; L-valine from pyruvate: step 3/4. Functions in the biosynthesis of branched-chain amino acids. Catalyzes the dehydration of (2R,3R)-2,3-dihydroxy-3-methylpentanoate (2,3-dihydroxy-3-methylvalerate) into 2-oxo-3-methylpentanoate (2-oxo-3-methylvalerate) and of (2R)-2,3-dihydroxy-3-methylbutanoate (2,3-dihydroxyisovalerate) into 2-oxo-3-methylbutanoate (2-oxoisovalerate), the penultimate precursor to L-isoleucine and L-valine, respectively. This Chloroherpeton thalassium (strain ATCC 35110 / GB-78) protein is Dihydroxy-acid dehydratase.